Consider the following 309-residue polypeptide: Ribosomal RNA small subunit methyltransferase H (309 aa).

S-adenosyl-L-methionine-binding positions include 33-35 (GGH), Asp-53, Phe-79, Asp-100, and Gln-107.

The protein belongs to the methyltransferase superfamily. RsmH family.

It localises to the cytoplasm. The enzyme catalyses cytidine(1402) in 16S rRNA + S-adenosyl-L-methionine = N(4)-methylcytidine(1402) in 16S rRNA + S-adenosyl-L-homocysteine + H(+). Functionally, specifically methylates the N4 position of cytidine in position 1402 (C1402) of 16S rRNA. This Clostridium botulinum (strain Kyoto / Type A2) protein is Ribosomal RNA small subunit methyltransferase H.